The sequence spans 593 residues: Serine/threonine-protein kinase SSN3 (593 aa).

The Protein kinase domain occupies 90–489; the sequence is YEIIGYIAAG…AIDALDHVYF (400 aa). 96 to 104 contributes to the ATP binding site; that stretch reads IAAGTYGKV. Residues 161-199 are disordered; it reads KPSHKRFTPPNNSNSTQIRSNSGSETNVRINSSSITNNS. The span at 169–185 shows a compositional bias: polar residues; sequence PPNNSNSTQIRSNSGSE. Residues 186-199 show a composition bias toward low complexity; that stretch reads TNVRINSSSITNNS. An ATP-binding site is contributed by Lys-211. Residue Asp-312 is the Proton acceptor of the active site. 2 disordered regions span residues 517–551 and 569–593; these read DNDITNVGNDNNQANHSQKQPMHGNNNNKNGNMNG and AAVSGNGNNPTSNTATGGSARKKRK. Polar residues predominate over residues 518-536; sequence NDITNVGNDNNQANHSQKQ. Positions 540-551 are enriched in low complexity; it reads GNNNNKNGNMNG. Positions 573–585 are enriched in polar residues; it reads GNGNNPTSNTATG.

The protein belongs to the protein kinase superfamily. CMGC Ser/Thr protein kinase family. CDC2/CDKX subfamily. Component of the SRB8-11 complex, a regulatory module of the Mediator complex. The cofactor is Mg(2+).

It is found in the nucleus. It carries out the reaction L-seryl-[protein] + ATP = O-phospho-L-seryl-[protein] + ADP + H(+). It catalyses the reaction L-threonyl-[protein] + ATP = O-phospho-L-threonyl-[protein] + ADP + H(+). The catalysed reaction is [DNA-directed RNA polymerase] + ATP = phospho-[DNA-directed RNA polymerase] + ADP + H(+). Component of the SRB8-11 complex. The SRB8-11 complex is a regulatory module of the Mediator complex which is itself involved in regulation of basal and activated RNA polymerase II-dependent transcription. The SRB8-11 complex may be involved in the transcriptional repression of a subset of genes regulated by Mediator. It may inhibit the association of the Mediator complex with RNA polymerase II to form the holoenzyme complex. The SRB8-11 complex phosphorylates the C-terminal domain (CTD) of the largest subunit of RNA polymerase II. This is Serine/threonine-protein kinase SSN3 (SSN3) from Kluyveromyces lactis (strain ATCC 8585 / CBS 2359 / DSM 70799 / NBRC 1267 / NRRL Y-1140 / WM37) (Yeast).